The following is a 650-amino-acid chain: MSTRVETLEFQAEARQLLQLMVHSIYSNKDIFLRELISNASDALDKLRIASLVKDGPRVDSADLRIEIEADVNARTLTVRDNGIGMSRDEVVGLIGTIAKSGTAELLRKLRESEDGAASSDLIGQFGVGFYSTFMVADKVTLLTGKAGESGGTRWESDGAGTYVIETVDDAPRGTAVTVHLKPEDSEDRLYDYTDENKIREIVKRYSDFIAWPIRLVSAPAAKDRDSNDDGTAESGAGAENAGDRPLNSMKALWARPQSEVDKAEYDQFYQHLSHDWTGPLEVIHMKGEGTFEYEALLFIPSRAPLDLFTRDARRGVQLYVKRVFIMDDCAELLPNYLRFVRGVVDTHDLSLNISREILQQDRRIQLVRRRLVKKILASIRALQENDAERYRTLWKEFGAALKEGLLEDADNQDAILGLVSVDSTHDADRPTTLREYIERMKDAQNEIYYLTGDSRGMIENSPHMEAFRAKGYEVLILTDPVDEVWVERVAEFDGKPLKSIAKGEVDLDTDDEKKSSEAEREQLRKDFAALLPWLAAKLEDDVKEVRLSSRLTTSPACLVGDTFDMTPALEKMYRAMGHEMPRPKRILELNPTHALVMGLRAAHERDADSAALGDTAELLYGMALLAEGGELRDPARFTRLLAERLAEAL.

The tract at residues Met1 to Arg356 is a; substrate-binding. The disordered stretch occupies residues Ala222–Arg245. Residues Glu357–Lys572 are b. A c region spans residues Met573–Leu650.

The protein belongs to the heat shock protein 90 family. In terms of assembly, homodimer.

It is found in the cytoplasm. Functionally, molecular chaperone. Has ATPase activity. The protein is Chaperone protein HtpG of Frankia casuarinae (strain DSM 45818 / CECT 9043 / HFP020203 / CcI3).